The chain runs to 199 residues: mRNA export protein mlo3 (199 aa).

Positions 1-41 (MSMELDQSLDAIIASKPKGGIRKRRARSNKPKPTKNAKPAV) are disordered. Basic residues predominate over residues 19 to 35 (GGIRKRRARSNKPKPTK). The RRM domain maps to 55–134 (SKIIVSNLPT…RKMKVEIILD (80 aa)). Positions 144 to 199 (ARVSPASNASATASKNGAKSSKRKTTRRRRTPNRPKKSAEELDKEMDDYFGSNEKE) are disordered. Residues 148 to 161 (PASNASATASKNGA) are compositionally biased toward polar residues. Over residues 163 to 179 (SSKRKTTRRRRTPNRPK) the composition is skewed to basic residues.

As to quaternary structure, interacts with rpn15/dss1, mex67 and uap56.

Its subcellular location is the nucleus. In terms of biological role, has a role in the mRNA export process. Interferes with mitotic chromosome segregation when overexpressed. This Schizosaccharomyces pombe (strain 972 / ATCC 24843) (Fission yeast) protein is mRNA export protein mlo3 (mlo3).